A 249-amino-acid chain; its full sequence is Type III pantothenate kinase (249 aa).

6 to 13 (DCGNSFIK) is a binding site for ATP. Substrate is bound by residues Tyr93 and 100–103 (GLDR). Asp102 acts as the Proton acceptor in catalysis. Asp122 contacts K(+). Thr125 lines the ATP pocket. Substrate is bound at residue Thr181.

This sequence belongs to the type III pantothenate kinase family. Homodimer. Requires NH4(+) as cofactor. K(+) is required as a cofactor.

It is found in the cytoplasm. It carries out the reaction (R)-pantothenate + ATP = (R)-4'-phosphopantothenate + ADP + H(+). Its pathway is cofactor biosynthesis; coenzyme A biosynthesis; CoA from (R)-pantothenate: step 1/5. Its function is as follows. Catalyzes the phosphorylation of pantothenate (Pan), the first step in CoA biosynthesis. The chain is Type III pantothenate kinase from Pseudomonas savastanoi pv. phaseolicola (strain 1448A / Race 6) (Pseudomonas syringae pv. phaseolicola (strain 1448A / Race 6)).